We begin with the raw amino-acid sequence, 151 residues long: Small ribosomal subunit protein uS11 (151 aa).

The segment at 131–151 (DVTPVPSDSTRRKGGRRGRRL) is disordered. Positions 142-151 (RKGGRRGRRL) are enriched in basic residues.

This sequence belongs to the universal ribosomal protein uS11 family.

The protein is Small ribosomal subunit protein uS11 of Bombyx mori (Silk moth).